The sequence spans 534 residues: Glucomannan 4-beta-mannosyltransferase 2 (534 aa).

A helical membrane pass occupies residues 36–56; it reads VIVPLLQLAVYICLLMSVMLL. Asp136 is a catalytic residue. Substrate is bound by residues Asp195 and Asp197. The active site involves Asp289. The next 4 helical transmembrane spans lie at 368–388, 404–426, 483–503, and 509–529; these read IIAH…TILV, IITI…WILF, LNTL…YDFV, and YFIY…GWIG.

The protein belongs to the glycosyltransferase 2 family. Plant cellulose synthase-like A subfamily.

Its subcellular location is the golgi apparatus membrane. It catalyses the reaction GDP-mannose + (glucomannan)n = GDP + (glucomannan)n+1.. In terms of biological role, possesses glucomannan synthase and mannan synthase activities in vitro. Mannan synthase consists of a 4-beta-mannosyltransferase activity on mannan using GDP-mannose. The beta-1,4-mannan product is the backbone for galactomannan synthesis by galactomannan galactosyltransferase. Galactomannan is a noncellulosic polysaccharides of plant cell wall. This Arabidopsis thaliana (Mouse-ear cress) protein is Glucomannan 4-beta-mannosyltransferase 2.